The sequence spans 121 residues: Small ribosomal subunit protein uS13 (121 aa).

The interval 92-121 (RKGLPMRGQRTRTNARTRKGPRRAAQALKK) is disordered.

It belongs to the universal ribosomal protein uS13 family. As to quaternary structure, part of the 30S ribosomal subunit. Forms a loose heterodimer with protein S19. Forms two bridges to the 50S subunit in the 70S ribosome.

In terms of biological role, located at the top of the head of the 30S subunit, it contacts several helices of the 16S rRNA. In the 70S ribosome it contacts the 23S rRNA (bridge B1a) and protein L5 of the 50S subunit (bridge B1b), connecting the 2 subunits; these bridges are implicated in subunit movement. Contacts the tRNAs in the A and P-sites. The sequence is that of Small ribosomal subunit protein uS13 from Burkholderia thailandensis (strain ATCC 700388 / DSM 13276 / CCUG 48851 / CIP 106301 / E264).